The sequence spans 146 residues: 3-dehydroquinate dehydratase (146 aa).

Tyr-22 (proton acceptor) is an active-site residue. Positions 74, 80, and 87 each coordinate substrate. The active-site Proton donor is the His-100. Substrate contacts are provided by residues 101–102 (LS) and Arg-111.

The protein belongs to the type-II 3-dehydroquinase family. Homododecamer.

It catalyses the reaction 3-dehydroquinate = 3-dehydroshikimate + H2O. The protein operates within metabolic intermediate biosynthesis; chorismate biosynthesis; chorismate from D-erythrose 4-phosphate and phosphoenolpyruvate: step 3/7. In terms of biological role, catalyzes a trans-dehydration via an enolate intermediate. The protein is 3-dehydroquinate dehydratase of Clostridium perfringens (strain 13 / Type A).